Here is a 56-residue protein sequence, read N- to C-terminus: Ribosome biogenesis protein Nop10 (56 aa).

It belongs to the NOP10 family.

Its function is as follows. Involved in ribosome biogenesis; more specifically in 18S rRNA pseudouridylation and in cleavage of pre-rRNA. This Saccharolobus islandicus (strain Y.N.15.51 / Yellowstone #2) (Sulfolobus islandicus) protein is Ribosome biogenesis protein Nop10.